The chain runs to 31 residues: Cyclotide vpub-B (31 aa).

Positions 1–31 (GIIPCGESCVFIPCITSVVGCSCKSKVCYKN) form a cross-link, cyclopeptide (Gly-Asn). 3 disulfide bridges follow: cysteine 5–cysteine 21, cysteine 9–cysteine 23, and cysteine 14–cysteine 28.

It belongs to the cyclotide family. Bracelet subfamily. In terms of processing, this is a cyclic peptide.

Probably participates in a plant defense mechanism. In Viola pubescens (Downy yellow violet), this protein is Cyclotide vpub-B.